The chain runs to 488 residues: 3-octaprenyl-4-hydroxybenzoate carboxy-lyase (488 aa).

Asn-172 contributes to the Mn(2+) binding site. Prenylated FMN-binding positions include 175-177 (IYR), 189-191 (RWL), and 194-195 (RG). Glu-238 contributes to the Mn(2+) binding site. The Proton donor role is filled by Asp-287.

This sequence belongs to the UbiD family. In terms of assembly, homohexamer. The cofactor is prenylated FMN. It depends on Mn(2+) as a cofactor.

Its subcellular location is the cell membrane. It carries out the reaction a 4-hydroxy-3-(all-trans-polyprenyl)benzoate + H(+) = a 2-(all-trans-polyprenyl)phenol + CO2. The protein operates within cofactor biosynthesis; ubiquinone biosynthesis. Functionally, catalyzes the decarboxylation of 3-octaprenyl-4-hydroxy benzoate to 2-octaprenylphenol, an intermediate step in ubiquinone biosynthesis. This is 3-octaprenyl-4-hydroxybenzoate carboxy-lyase from Legionella pneumophila (strain Paris).